A 581-amino-acid chain; its full sequence is Semenogelin-2 (581 aa).

An N-terminal signal peptide occupies residues 1–23 (MKSIILFVLSLLLILEKQAAVMG). 4 disordered regions span residues 24–62 (QKGGSKGQSPSGSSQFPHGQKGQHYFGQKDQQHTKSKGS), 132–157 (GGKAHRGTQNPSQDQGNSPSGRGISS), 173–194 (KEQASASGAQKGRTQGRSQSSY), and 271–581 (NLNQ…PIST). Composition is skewed to polar residues over residues 138 to 157 (GTQNPSQDQGNSPSGRGISS) and 174 to 194 (EQASASGAQKGRTQGRSQSSY). Positions 291–310 (HTEERQLNHGEKSVQKDISK) are enriched in basic and acidic residues. Over residues 324–333 (KSQNQVTIHS) the composition is skewed to polar residues. Basic and acidic residues predominate over residues 334 to 344 (QDQEHGHKENK). A compositionally biased stretch (polar residues) spans 366–396 (KSVSKGSISIQTEEQIHGKSQNQVRIPSQAQ). 2 stretches are compositionally biased toward basic and acidic residues: residues 412–425 (TEERRLNSGEKDIQ) and 455–464 (DQEHGHKENK). Polar residues-rich tracts occupy residues 481-497 (GKNTQKDVSQSSISFQT) and 505-529 (SQIQTPNPNQDQWSGQNAKGKSGQS). Basic and acidic residues-rich tracts occupy residues 530–545 (ADREQDLLSHEQKGRY) and 558–581 (TEHEVARDDHLTQQYNEDRNPIST).

Belongs to the semenogelin family. As to quaternary structure, interacts with SERPINA5.

It is found in the secreted. Participates in the formation of a gel matrix (sperm coagulum) entrapping the accessory gland secretions and ejaculated spermatozoa. The chain is Semenogelin-2 (SEMG2) from Pongo abelii (Sumatran orangutan).